A 159-amino-acid chain; its full sequence is UPF0262 protein Dshi_0980 (159 aa).

Belongs to the UPF0262 family.

This is UPF0262 protein Dshi_0980 from Dinoroseobacter shibae (strain DSM 16493 / NCIMB 14021 / DFL 12).